The following is a 103-amino-acid chain: Protein SUP-1 (103 aa).

Positions 1 to 16 (MMSYIALAACIGLAMA) are cleaved as a signal peptide. Over 17-75 (ANVDHDVKSAVNEVTTTKDGDTYCPVPLVGTKCGTSSIFHYWKCCGELNKECCFNLQTW) the chain is Extracellular. The chain crosses the membrane as a helical span at residues 76-96 (VWVTLALFGVIFIASFVISLV). Topologically, residues 97–103 (RCICCRK) are cytoplasmic.

As to expression, expressed in a subset of neurons and in body wall muscles. In the nervous system, expressed specifically in cholinergic motor neurons of the ventral nerve cord, a subset of cholinergic head neurons, anterior sublateral neurons, and body sublateral neurons (at protein level).

It is found in the cell membrane. Its subcellular location is the perikaryon. The protein localises to the cell projection. It localises to the synapse. The protein resides in the cytoplasmic vesicle. It is found in the secretory vesicle. Its subcellular location is the synaptic vesicle. In terms of biological role, may be involved in trafficking or stabilization of the vesicular acetylcholine transporter unc-17. The polypeptide is Protein SUP-1 (Caenorhabditis elegans).